Here is a 325-residue protein sequence, read N- to C-terminus: Sulfite dehydrogenase subunit C (325 aa).

8 helical membrane-spanning segments follow: residues 5-25 (FSVI…LAMV), 43-63 (FYAV…GASF), 87-107 (EVIV…AHWF), 126-146 (LLLG…TAMI), 165-185 (FLFL…AYIG), 186-206 (NPLV…GLAS), 266-286 (VYLV…YLIG), and 290-310 (LPII…WSFF).

Belongs to the DmsC family. Forms a heterotrimeric membrane-bound complex composed of a catalytic heterodimer (SoeAB) and a membrane anchor protein (SoeC).

Its subcellular location is the cell inner membrane. Part of the SoeABC complex that catalyzes the oxidation of sulfite to sulfate. SoeC probably anchors and stabilizes the catalytic subunits. In Allochromatium vinosum (strain ATCC 17899 / DSM 180 / NBRC 103801 / NCIMB 10441 / D) (Chromatium vinosum), this protein is Sulfite dehydrogenase subunit C.